The primary structure comprises 1049 residues: Dyslexia-associated protein KIAA0319-like protein (1049 aa).

Over 1–29 the chain is Cytoplasmic; that stretch reads MEKRLGVKPNPASWILSGYYWQTSAKWLR. Residues 30-50 form a helical membrane-spanning segment; sequence SLYLFYTCFCFSVLWLSTDAS. One can recognise an MANSC domain in the interval 49-127; the sequence is ASESRCQQGK…AFRTHSSNSM (79 aa). Residues 51–932 lie on the Extracellular side of the membrane; that stretch reads ESRCQQGKTQ…DSNCEWSVLY (882 aa). Residues Asn247, Asn395, Asn472, Asn487, and Asn525 are each glycosylated (N-linked (GlcNAc...) asparagine). 5 PKD domains span residues 312–401, 409–498, 504–594, 600–688, and 694–785; these read SAGE…VKPE, IAIV…VNKA, VANA…VQPE, QADA…VKEE, and IAKI…VKPD. The helical transmembrane segment at 933 to 953 threads the bilayer; it reads VIIATFVIVVALGILSWTVIC. Residues 954-1049 are Cytoplasmic-facing; sequence CCKRQKGKPK…KARSPREEIL (96 aa). The residue at position 974 (Thr974) is a Phosphothreonine. Phosphoserine is present on residues Ser978, Ser1009, and Ser1031. The segment at 1022–1049 is disordered; the sequence is GKLLHGQNGSVPNGQTPLKARSPREEIL. A compositionally biased stretch (polar residues) spans 1028 to 1037; the sequence is QNGSVPNGQT. Position 1037 is a phosphothreonine (Thr1037).

As to quaternary structure, interacts with RTN4R. In terms of assembly, (Microbial infection) Interacts with AAV-2 VP1. Post-translationally, N-glycosylated. Expressed in cortical neurons in the brain cortex (at protein level).

It localises to the cytoplasmic granule membrane. Its subcellular location is the golgi apparatus membrane. The protein localises to the golgi apparatus. The protein resides in the trans-Golgi network membrane. It is found in the cell membrane. Possible role in axon guidance through interaction with RTN4R. Its function is as follows. (Microbial infection) Acts as a receptor for adeno-associated virus and is involved in adeno-associated virus infection through endocytosis system. This Homo sapiens (Human) protein is Dyslexia-associated protein KIAA0319-like protein.